Here is a 253-residue protein sequence, read N- to C-terminus: Toxin PezT (253 aa).

Position 39-46 (39-46 (GQSGAGKT)) interacts with ATP. The Proton acceptor role is filled by Asp66.

The protein belongs to the zeta toxin family. As to quaternary structure, forms a PezA(2)PezT(2) heterotetramer. The heterotetramer is much more stable than either of the proteins alone, and a specific mechanism may be necessary to liberate the toxin.

It catalyses the reaction UDP-N-acetyl-alpha-D-glucosamine + ATP = UDP-N-acetyl-alpha-D-glucosamine 3'-phosphate + ADP + H(+). Its function is as follows. Toxic component of a type II toxin-antitoxin (TA) system. Phosphorylates UDP-N-acetyl-D-glucosamine (UNAG) on the 3'-hydroxyl group of the N-acetyl-D-glucosamine moiety, yielding UNAG-3P. UNAG-3P inhibits MurA, the first committed step in cell wall synthesis, which is then blocked. Upon expression in E.coli results in decreased cell growth and viability, followed 3 hours later by growth restoration; the toxic effect and phosphorylation of UNAG are neutralized by coexpression with cognate antitoxin PezA. A mutant lacking the last 11 residues is stably maintained in E.coli, unlike the wild-type which undergoes spontaneous mutation. Expression of the deletion mutant in rapidly growing liquid cultures leads to cell bulging, permeabilization and massive lysis by 1 hour. Cells that survive are not able to undergo cytokinesis. Expression in slowly growing cells leads to bulging but not lysis. In terms of biological role, acts as a corepressor of its own operon with PezA; it is not clear if it binds DNA alone. This chain is Toxin PezT (pezT), found in Streptococcus pneumoniae serotype 4 (strain ATCC BAA-334 / TIGR4).